The following is a 679-amino-acid chain: UvrABC system protein B (679 aa).

In terms of domain architecture, Helicase ATP-binding spans 25-176 (KGVNTGKEFQ…NLRSYLRSLV (152 aa)). 38-45 (GATGTGKT) is a binding site for ATP. The short motif at 91–114 (YYDYYQPEAYVPVSDTYIAKTASI) is the Beta-hairpin element. Positions 429 to 583 (QIEDLLSEIR…KKYNQVNGIT (155 aa)) constitute a Helicase C-terminal domain. The UVR domain maps to 639–674 (PDLIEKLEIKMKDAAKELNFEEAANLRDRIKKLRQK).

This sequence belongs to the UvrB family. In terms of assembly, forms a heterotetramer with UvrA during the search for lesions. Interacts with UvrC in an incision complex.

The protein localises to the cytoplasm. The UvrABC repair system catalyzes the recognition and processing of DNA lesions. A damage recognition complex composed of 2 UvrA and 2 UvrB subunits scans DNA for abnormalities. Upon binding of the UvrA(2)B(2) complex to a putative damaged site, the DNA wraps around one UvrB monomer. DNA wrap is dependent on ATP binding by UvrB and probably causes local melting of the DNA helix, facilitating insertion of UvrB beta-hairpin between the DNA strands. Then UvrB probes one DNA strand for the presence of a lesion. If a lesion is found the UvrA subunits dissociate and the UvrB-DNA preincision complex is formed. This complex is subsequently bound by UvrC and the second UvrB is released. If no lesion is found, the DNA wraps around the other UvrB subunit that will check the other stand for damage. The polypeptide is UvrABC system protein B (Prochlorococcus marinus (strain MIT 9301)).